Here is an 813-residue protein sequence, read N- to C-terminus: Leucine--tRNA ligase (813 aa).

Positions 42–52 (PYTSGNLHIGH) match the 'HIGH' region motif. The 'KMSKS' region signature appears at 580-584 (KMSKS). Lys583 contributes to the ATP binding site.

Belongs to the class-I aminoacyl-tRNA synthetase family.

It is found in the cytoplasm. It catalyses the reaction tRNA(Leu) + L-leucine + ATP = L-leucyl-tRNA(Leu) + AMP + diphosphate. This is Leucine--tRNA ligase from Dehalococcoides mccartyi (strain CBDB1).